Reading from the N-terminus, the 485-residue chain is UDP-glycosyltransferase 91D1 (485 aa).

UDP-alpha-D-glucose contacts are provided by residues S296, W355–A356, H373–E381, and F395–Q398.

It belongs to the UDP-glycosyltransferase family.

Its function is as follows. May glycosylate diterpenes or flavonols in leaves. This chain is UDP-glycosyltransferase 91D1, found in Stevia rebaudiana (Stevia).